The following is a 1088-amino-acid chain: RNA-directed RNA polymerase (1088 aa).

Residues 501 to 687 (LSYGDVTRFL…AKRYIAGGKI (187 aa)) form the RdRp catalytic domain.

The protein belongs to the reoviridae RNA-directed RNA polymerase family. As to quaternary structure, interacts with VP3 (Potential). Interacts with VP2; this interaction activates VP1. Interacts with NSP5; this interaction is probably necessary for the formation of functional virus factories. Interacts with NSP2; this interaction is weak. Mg(2+) is required as a cofactor.

It localises to the virion. It carries out the reaction RNA(n) + a ribonucleoside 5'-triphosphate = RNA(n+1) + diphosphate. Functionally, RNA-directed RNA polymerase that is involved in both transcription and genome replication. Together with VP3 capping enzyme, forms an enzyme complex positioned near the channels situated at each of the five-fold vertices of the core. Following infection, the outermost layer of the virus is lost, leaving a double-layered particle (DLP) made up of the core and VP6 shell. VP1 then catalyzes the transcription of fully conservative plus-strand genomic RNAs that are extruded through the DLP's channels into the cytoplasm where they function as mRNAs for translation of viral proteins. One copy of each of the viral (+)RNAs is also recruited during core assembly, together with newly synthesized polymerase complexes and VP2. The polymerase of these novo-formed particles catalyzes the synthesis of complementary minus-strands leading to dsRNA formation. To do so, the polymerase specifically recognizes and binds 4 bases 5'-UGUG-3' in the conserved 3'-sequence of plus-strand RNA templates. VP2 presumably activates the autoinhibited VP1-RNA complex to coordinate packaging and genome replication. Once dsRNA synthesis is complete, the polymerase switches to the transcriptional mode, thus providing secondary transcription. The sequence is that of RNA-directed RNA polymerase from Homo sapiens (Human).